The primary structure comprises 240 residues: Large ribosomal subunit protein uL2 (240 aa).

Over residues 1–20 the composition is skewed to polar residues; that stretch reads MGKRLQSQNRGKGTPRYTSP. Disordered stretches follow at residues 1–33 and 204–240; these read MGKR…YRKF and PFGG…TGKR. 2 stretches are compositionally biased toward basic residues: residues 21–30 and 224–240; these read THKRKGAVKY and SPGR…TGKR.

This sequence belongs to the universal ribosomal protein uL2 family. In terms of assembly, part of the 50S ribosomal subunit. Forms a bridge to the 30S subunit in the 70S ribosome.

In terms of biological role, one of the primary rRNA binding proteins. Required for association of the 30S and 50S subunits to form the 70S ribosome, for tRNA binding and peptide bond formation. It has been suggested to have peptidyltransferase activity; this is somewhat controversial. Makes several contacts with the 16S rRNA in the 70S ribosome. The chain is Large ribosomal subunit protein uL2 from Methanococcus aeolicus (strain ATCC BAA-1280 / DSM 17508 / OCM 812 / Nankai-3).